Reading from the N-terminus, the 365-residue chain is Protein RecA (365 aa).

73–80 serves as a coordination point for ATP; sequence GPESSGKT.

Belongs to the RecA family.

It localises to the cytoplasm. Its function is as follows. Can catalyze the hydrolysis of ATP in the presence of single-stranded DNA, the ATP-dependent uptake of single-stranded DNA by duplex DNA, and the ATP-dependent hybridization of homologous single-stranded DNAs. It interacts with LexA causing its activation and leading to its autocatalytic cleavage. The polypeptide is Protein RecA (Prochlorococcus marinus (strain MIT 9215)).